The following is a 135-amino-acid chain: Small ribosomal subunit protein uS11 (135 aa).

Positions M1–G10 are enriched in polar residues. The interval M1–H28 is disordered. Positions K12 to H28 are enriched in basic residues.

The protein belongs to the universal ribosomal protein uS11 family. Part of the 30S ribosomal subunit. Interacts with proteins S7 and S18. Binds to IF-3.

Its function is as follows. Located on the platform of the 30S subunit, it bridges several disparate RNA helices of the 16S rRNA. Forms part of the Shine-Dalgarno cleft in the 70S ribosome. This is Small ribosomal subunit protein uS11 from Acidothermus cellulolyticus (strain ATCC 43068 / DSM 8971 / 11B).